A 273-amino-acid polypeptide reads, in one-letter code: MRLYRDRAVVLRQHKLGEADRIVSLLTREHGLVRAVAKGVRRTRSKFGARLEPFAHIDVQLHPGRNLDIVTQVQAIDAFASDIVSDYGRYTCACAMLETAERIAGEERAPVPALHRLTVAALRAVADGTRPRELVLDAYLLRAMGVAGWAPALIECARCAAPGPHRAFHVAAGGSVCVHCRPSGSVTPPQGVLDLMAALYDGDWEHAQISTPAHRSQASGLVAAHLQWHLERQLRTLPLVERPGRAEVARNIRQDMAHGNQAEEQLPPAASGA.

Belongs to the RecO family.

Its function is as follows. Involved in DNA repair and RecF pathway recombination. This Mycolicibacterium gilvum (strain PYR-GCK) (Mycobacterium gilvum (strain PYR-GCK)) protein is DNA repair protein RecO.